We begin with the raw amino-acid sequence, 342 residues long: tRNA-dihydrouridine(20/20a) synthase (342 aa).

FMN is bound by residues 10–12 (PMV) and glutamine 63. Catalysis depends on cysteine 93, which acts as the Proton donor. FMN contacts are provided by residues lysine 132, histidine 164, 203–205 (NGG), and 225–226 (GR). Positions 313–331 (EEEVGEEGEKEKPGPRGQR) are enriched in basic and acidic residues. The segment at 313-342 (EEEVGEEGEKEKPGPRGQREAAPGPAREGV) is disordered.

The protein belongs to the Dus family. DusA subfamily. FMN serves as cofactor.

It catalyses the reaction 5,6-dihydrouridine(20) in tRNA + NADP(+) = uridine(20) in tRNA + NADPH + H(+). It carries out the reaction 5,6-dihydrouridine(20) in tRNA + NAD(+) = uridine(20) in tRNA + NADH + H(+). The catalysed reaction is 5,6-dihydrouridine(20a) in tRNA + NADP(+) = uridine(20a) in tRNA + NADPH + H(+). The enzyme catalyses 5,6-dihydrouridine(20a) in tRNA + NAD(+) = uridine(20a) in tRNA + NADH + H(+). Catalyzes the synthesis of 5,6-dihydrouridine (D), a modified base found in the D-loop of most tRNAs, via the reduction of the C5-C6 double bond in target uridines. Specifically modifies U20 and U20a in tRNAs. The polypeptide is tRNA-dihydrouridine(20/20a) synthase (dus) (Thermus thermophilus (strain ATCC 27634 / DSM 579 / HB8)).